Consider the following 1401-residue polypeptide: Lysine-specific demethylase 6A (1401 aa).

The interval 1–1095 (MKSCGVSLAT…TNIDLSDDKK (1095 aa)) is interaction with SUPT6H. TPR repeat units lie at residues 95 to 128 (SDFF…QSDY), 132 to 165 (AAFL…DPSF), 169 to 203 (KEIH…NPCT), 207 to 240 (AEIQ…ENLS), 245 to 285 (ATIL…DPNS), 286 to 319 (GQSW…SEAS), 321 to 353 (DTWC…DHGH), and 355 to 387 (AAWM…KNCS). Residues 439–453 (AMNTAQQNTSDNWSG) are compositionally biased toward polar residues. The interval 439–463 (AMNTAQQNTSDNWSGGNAPPPVEQQ) is disordered. Omega-N-methylarginine is present on residues arginine 519 and arginine 549. Composition is skewed to polar residues over residues 596–606 (NHVTGSGSNGN), 619–642 (HNRT…STQG), and 660–743 (LSST…STAS). The segment at 596-745 (NHVTGSGSNG…ETPNSTASVE (150 aa)) is disordered. A Phosphoserine modification is found at serine 769. Disordered regions lie at residues 795–863 (GTCD…EESQ), 914–941 (LLDK…PPTP), and 1043–1080 (FQES…GPFK). Residues 814–833 (SVASSPSSAISTATPSPKST) are compositionally biased toward low complexity. Threonine 827 carries the phosphothreonine modification. Residue serine 829 is modified to Phosphoserine. A compositionally biased stretch (polar residues) spans 834 to 848 (EQTTTNSVTSLNSPH). Pro residues predominate over residues 918-931 (CPPPRPPSSPYPPL). Basic and acidic residues predominate over residues 1046–1063 (SLREENEKRSHHKDHSDS). One can recognise a JmjC domain in the interval 1095 to 1258 (KWKLQLHELT…YKLAVERYEW (164 aa)). Positions 1146, 1148, and 1226 each coordinate Fe cation. Zn(2+) is bound by residues cysteine 1331, cysteine 1334, cysteine 1358, and cysteine 1361.

It belongs to the UTX family. Component of the MLL2/3 complex (also named ASCOM complex), at least composed of KMT2D/MLL2 or KMT2C/MLL3, ASH2L, RBBP5, WDR5, NCOA6, DPY30, KDM6A (or KDM6B), PAXIP1/PTIP, PAGR1 and alpha- and beta-tubulin. Interacts with TLE1. Interacts with SUPT6H. Interacts with SMARCA4. Interacts with PROSER1. Requires L-ascorbate as cofactor. It depends on Fe(2+) as a cofactor. Expressed in brain, heart and spleen.

It is found in the nucleus. The catalysed reaction is N(6),N(6),N(6)-trimethyl-L-lysyl(27)-[histone H3] + 2 2-oxoglutarate + 2 O2 = N(6)-methyl-L-lysyl(27)-[histone H3] + 2 formaldehyde + 2 succinate + 2 CO2. Histone demethylase that specifically demethylates 'Lys-27' of histone H3, thereby playing a central role in histone code. Demethylates trimethylated and dimethylated but not monomethylated H3 'Lys-27'. Plays a central role in regulation of posterior development, by regulating HOX gene expression. Demethylation of 'Lys-27' of histone H3 is concomitant with methylation of 'Lys-4' of histone H3, and regulates the recruitment of the PRC1 complex and monoubiquitination of histone H2A. Plays a demethylase-independent role in chromatin remodeling to regulate T-box family member-dependent gene expression. The sequence is that of Lysine-specific demethylase 6A (Kdm6a) from Mus musculus (Mouse).